A 600-amino-acid chain; its full sequence is E3 ubiquitin-protein ligase RLIM (600 aa).

Met-1 is subject to N-acetylmethionine. The span at Met-1–Ser-11 shows a compositional bias: basic and acidic residues. 3 disordered regions span residues Met-1–Arg-24, Asn-49–Gly-355, and Ser-417–Asp-497. Polar residues-rich tracts occupy residues Ser-103–Ser-131 and Ile-140–Glu-152. Ser-163 carries the post-translational modification Phosphoserine. Residues Asn-166–Met-175 show a composition bias toward polar residues. Positions Glu-176–Pro-187 are enriched in low complexity. A phosphoserine mark is found at Ser-194, Ser-227, and Ser-229. A compositionally biased stretch (basic and acidic residues) spans Arg-213–Arg-228. Residues Leu-244–Ser-255 show a composition bias toward polar residues. Ser-269 is modified (phosphoserine). The segment covering Ser-288–Gly-306 has biased composition (low complexity). Residues Arg-322–Ile-332 show a composition bias toward basic and acidic residues. Residues Ala-333–Tyr-349 show a composition bias toward polar residues. Residues Ser-448–Ser-475 show a composition bias toward low complexity. The RING-type zinc-finger motif lies at Cys-546–Arg-587. Positions Glu-597 to Val-600 match the PDZ-binding motif.

It belongs to the RNF12 family. Interacts (via N-terminus) with TERF1. Interacts (via C-terminus) with ESR1. Interacts with LIM/homeobox factors such as LHX3. Interacts with LDB1, LDB2 and SIN3A. Interacts with LIMK1.

Its subcellular location is the nucleus. It carries out the reaction S-ubiquitinyl-[E2 ubiquitin-conjugating enzyme]-L-cysteine + [acceptor protein]-L-lysine = [E2 ubiquitin-conjugating enzyme]-L-cysteine + N(6)-ubiquitinyl-[acceptor protein]-L-lysine.. It participates in protein modification; protein ubiquitination. Its function is as follows. E3 ubiquitin-protein ligase that acts as a negative coregulator for LIM homeodomain transcription factors by mediating the ubiquitination and subsequent degradation of LIM cofactors LDB1 and LDB2 and by mediating the recruitment the SIN3a/histone deacetylase corepressor complex. Ubiquitination and degradation of LIM cofactors LDB1 and LDB2 allows DNA-bound LIM homeodomain transcription factors to interact with other protein partners such as RLIM. Plays a role in telomere length-mediated growth suppression by mediating the ubiquitination and degradation of TERF1. By targeting ZFP42 for degradation, acts as an activator of random inactivation of X chromosome in the embryo, a stochastic process in which one X chromosome is inactivated to minimize sex-related dosage differences of X-encoded genes in somatic cells of female placental mammals. This is E3 ubiquitin-protein ligase RLIM (Rlim) from Mus musculus (Mouse).